The sequence spans 439 residues: 26S rRNA (cytosine-C(5))-methyltransferase nsun-5 (439 aa).

Asp-266, Asp-293, and Asp-313 together coordinate S-adenosyl-L-methionine. Residue Cys-366 is the Nucleophile of the active site.

It belongs to the class I-like SAM-binding methyltransferase superfamily. RsmB/NOP family.

It carries out the reaction a cytidine in 26S rRNA + S-adenosyl-L-methionine = a 5-methylcytidine in 26S rRNA + S-adenosyl-L-homocysteine + H(+). S-adenosyl-L-methionine-dependent methyltransferase which methylates the carbon-5 position of cytosine 2381 to 5-methylcytosine (m5C2381) in 26S rRNA. Plays a role in the production of mature 5S, 5.8S, 18S and 26S rRNAs and promotes the processing of the internally transcribed spacer 2 (ITS2), which separates the 5.8S and 26S rRNAs on large pre-rRNA precursors. May play a role in the translation of leucine and proline codons. May play a role in maintaining ribosomal frameshifting in response to osmotic stress. Not required for global translation. This is 26S rRNA (cytosine-C(5))-methyltransferase nsun-5 from Caenorhabditis elegans.